The primary structure comprises 391 residues: Processive diacylglycerol beta-glucosyltransferase (391 aa).

Belongs to the glycosyltransferase 28 family. UgtP subfamily.

Its subcellular location is the cell membrane. The catalysed reaction is a 1,2-diacyl-3-O-(beta-D-glucopyranosyl)-sn-glycerol + UDP-alpha-D-glucose = a 1,2-diacyl-3-O-(beta-D-Glc-(1-&gt;6)-beta-D-Glc)-sn-glycerol + UDP + H(+). It carries out the reaction a 1,2-diacyl-sn-glycerol + UDP-alpha-D-glucose = a 1,2-diacyl-3-O-(beta-D-glucopyranosyl)-sn-glycerol + UDP + H(+). It participates in glycolipid metabolism; diglucosyl-diacylglycerol biosynthesis. In terms of biological role, processive glucosyltransferase involved in the biosynthesis of both the bilayer- and non-bilayer-forming membrane glucolipids. Is able to successively transfer two glucosyl residues to diacylglycerol (DAG), thereby catalyzing the formation of beta-monoglucosyl-DAG (3-O-(beta-D-glucopyranosyl)-1,2-diacyl-sn-glycerol) and beta-diglucosyl-DAG (3-O-(beta-D-glucopyranosyl-beta-(1-&gt;6)-D-glucopyranosyl)-1,2-diacyl-sn-glycerol). Beta-diglucosyl-DAG is the predominant glycolipid found in Bacillales and is also used as a membrane anchor for lipoteichoic acid (LTA). This is Processive diacylglycerol beta-glucosyltransferase from Staphylococcus aureus (strain bovine RF122 / ET3-1).